Here is a 592-residue protein sequence, read N- to C-terminus: Proteasome-associated ATPase (592 aa).

The segment covering 1 to 11 has biased composition (acidic residues); that stretch reads MTGYDSSEEAE. The tract at residues 1–24 is disordered; sequence MTGYDSSEEAERDSSPADGYRQTP. Residues 25 to 99 adopt a coiled-coil conformation; the sequence is AQLSAQIRVL…LKEEVDRLAQ (75 aa). Residue 281-286 coordinates ATP; that stretch reads GCGKTL. Residues 591–592 are docks into pockets in the proteasome alpha-ring; that stretch reads YL.

The protein belongs to the AAA ATPase family. As to quaternary structure, homohexamer. Assembles into a hexameric ring structure that caps the 20S proteasome core. Strongly interacts with the prokaryotic ubiquitin-like protein Pup through a hydrophobic interface; the interacting region of ARC lies in its N-terminal coiled-coil domain. There is one Pup binding site per ARC hexamer ring. Upon ATP-binding, the C-terminus of ARC interacts with the alpha-rings of the proteasome core, possibly by binding to the intersubunit pockets.

Its pathway is protein degradation; proteasomal Pup-dependent pathway. ATPase which is responsible for recognizing, binding, unfolding and translocation of pupylated proteins into the bacterial 20S proteasome core particle. May be essential for opening the gate of the 20S proteasome via an interaction with its C-terminus, thereby allowing substrate entry and access to the site of proteolysis. Thus, the C-termini of the proteasomal ATPase may function like a 'key in a lock' to induce gate opening and therefore regulate proteolysis. The chain is Proteasome-associated ATPase from Nakamurella multipartita (strain ATCC 700099 / DSM 44233 / CIP 104796 / JCM 9543 / NBRC 105858 / Y-104) (Microsphaera multipartita).